The sequence spans 157 residues: Crossover junction endodeoxyribonuclease RuvC (157 aa).

Residues Asp7, Glu67, and Asp140 contribute to the active site. Mg(2+) is bound by residues Asp7, Glu67, and Asp140.

It belongs to the RuvC family. In terms of assembly, homodimer which binds Holliday junction (HJ) DNA. The HJ becomes 2-fold symmetrical on binding to RuvC with unstacked arms; it has a different conformation from HJ DNA in complex with RuvA. In the full resolvosome a probable DNA-RuvA(4)-RuvB(12)-RuvC(2) complex forms which resolves the HJ. Mg(2+) is required as a cofactor.

The protein localises to the cytoplasm. The enzyme catalyses Endonucleolytic cleavage at a junction such as a reciprocal single-stranded crossover between two homologous DNA duplexes (Holliday junction).. Functionally, the RuvA-RuvB-RuvC complex processes Holliday junction (HJ) DNA during genetic recombination and DNA repair. Endonuclease that resolves HJ intermediates. Cleaves cruciform DNA by making single-stranded nicks across the HJ at symmetrical positions within the homologous arms, yielding a 5'-phosphate and a 3'-hydroxyl group; requires a central core of homology in the junction. The consensus cleavage sequence is 5'-(A/T)TT(C/G)-3'. Cleavage occurs on the 3'-side of the TT dinucleotide at the point of strand exchange. HJ branch migration catalyzed by RuvA-RuvB allows RuvC to scan DNA until it finds its consensus sequence, where it cleaves and resolves the cruciform DNA. In Rickettsia africae (strain ESF-5), this protein is Crossover junction endodeoxyribonuclease RuvC.